Reading from the N-terminus, the 476-residue chain is Aspartyl/glutamyl-tRNA(Asn/Gln) amidotransferase subunit B (476 aa).

The protein belongs to the GatB/GatE family. GatB subfamily. Heterotrimer of A, B and C subunits.

It carries out the reaction L-glutamyl-tRNA(Gln) + L-glutamine + ATP + H2O = L-glutaminyl-tRNA(Gln) + L-glutamate + ADP + phosphate + H(+). The catalysed reaction is L-aspartyl-tRNA(Asn) + L-glutamine + ATP + H2O = L-asparaginyl-tRNA(Asn) + L-glutamate + ADP + phosphate + 2 H(+). Its function is as follows. Allows the formation of correctly charged Asn-tRNA(Asn) or Gln-tRNA(Gln) through the transamidation of misacylated Asp-tRNA(Asn) or Glu-tRNA(Gln) in organisms which lack either or both of asparaginyl-tRNA or glutaminyl-tRNA synthetases. The reaction takes place in the presence of glutamine and ATP through an activated phospho-Asp-tRNA(Asn) or phospho-Glu-tRNA(Gln). This Neisseria meningitidis serogroup C (strain 053442) protein is Aspartyl/glutamyl-tRNA(Asn/Gln) amidotransferase subunit B.